The following is a 296-amino-acid chain: Immediate early response gene 5-like protein (296 aa).

The protein belongs to the IER family.

The sequence is that of Immediate early response gene 5-like protein (ier5l) from Xenopus tropicalis (Western clawed frog).